The following is a 329-amino-acid chain: Serpentine receptor class alpha-8 (329 aa).

6 helical membrane-spanning segments follow: residues 26–46, 60–80, 141–161, 187–207, 231–251, and 273–293; these read VDLITSFFTYMLSIIAIKMVL, FLNIFYANLYQIVYSIDVVVI, IFVGSFIAIVVMISTTSTGKL, TIHFYISTVVSLFNLAASVAL, VIESTETICFLNFTQFVFMFI, and FWVVWCYTVPFIALTFPLLLI.

Belongs to the nematode receptor-like protein sra family.

It localises to the membrane. The polypeptide is Serpentine receptor class alpha-8 (sra-8) (Caenorhabditis elegans).